Reading from the N-terminus, the 142-residue chain is Transcriptional regulator MraZ (142 aa).

2 consecutive SpoVT-AbrB domains span residues 5–51 (ASAL…PRPE) and 77–120 (AMDV…DAQT).

The protein belongs to the MraZ family. Forms oligomers.

The protein resides in the cytoplasm. The protein localises to the nucleoid. This Paraburkholderia phytofirmans (strain DSM 17436 / LMG 22146 / PsJN) (Burkholderia phytofirmans) protein is Transcriptional regulator MraZ.